A 296-amino-acid chain; its full sequence is Phosphatidylserine decarboxylase proenzyme (296 aa).

Catalysis depends on charge relay system; for autoendoproteolytic cleavage activity residues Asp-113, His-169, and Ser-256. Residue Ser-256 is the Schiff-base intermediate with substrate; via pyruvic acid; for decarboxylase activity of the active site. Ser-256 bears the Pyruvic acid (Ser); by autocatalysis mark.

This sequence belongs to the phosphatidylserine decarboxylase family. PSD-B subfamily. Prokaryotic type II sub-subfamily. Heterodimer of a large membrane-associated beta subunit and a small pyruvoyl-containing alpha subunit. The cofactor is pyruvate. Is synthesized initially as an inactive proenzyme. Formation of the active enzyme involves a self-maturation process in which the active site pyruvoyl group is generated from an internal serine residue via an autocatalytic post-translational modification. Two non-identical subunits are generated from the proenzyme in this reaction, and the pyruvate is formed at the N-terminus of the alpha chain, which is derived from the carboxyl end of the proenzyme. The autoendoproteolytic cleavage occurs by a canonical serine protease mechanism, in which the side chain hydroxyl group of the serine supplies its oxygen atom to form the C-terminus of the beta chain, while the remainder of the serine residue undergoes an oxidative deamination to produce ammonia and the pyruvoyl prosthetic group on the alpha chain. During this reaction, the Ser that is part of the protease active site of the proenzyme becomes the pyruvoyl prosthetic group, which constitutes an essential element of the active site of the mature decarboxylase.

The protein resides in the cell membrane. The catalysed reaction is a 1,2-diacyl-sn-glycero-3-phospho-L-serine + H(+) = a 1,2-diacyl-sn-glycero-3-phosphoethanolamine + CO2. The protein operates within phospholipid metabolism; phosphatidylethanolamine biosynthesis; phosphatidylethanolamine from CDP-diacylglycerol: step 2/2. Its function is as follows. Catalyzes the formation of phosphatidylethanolamine (PtdEtn) from phosphatidylserine (PtdSer). The protein is Phosphatidylserine decarboxylase proenzyme of Clostridium beijerinckii (strain ATCC 51743 / NCIMB 8052) (Clostridium acetobutylicum).